The following is a 1343-amino-acid chain: DNA-directed RNA polymerase subunit beta (1343 aa).

It belongs to the RNA polymerase beta chain family. As to quaternary structure, the RNAP catalytic core consists of 2 alpha, 1 beta, 1 beta' and 1 omega subunit. When a sigma factor is associated with the core the holoenzyme is formed, which can initiate transcription.

It catalyses the reaction RNA(n) + a ribonucleoside 5'-triphosphate = RNA(n+1) + diphosphate. Functionally, DNA-dependent RNA polymerase catalyzes the transcription of DNA into RNA using the four ribonucleoside triphosphates as substrates. The polypeptide is DNA-directed RNA polymerase subunit beta (Shewanella denitrificans (strain OS217 / ATCC BAA-1090 / DSM 15013)).